The following is a 273-amino-acid chain: Cell division protein ZipA (273 aa).

Position 1 (M1) is a topological domain, periplasmic. The helical transmembrane segment at 2–22 (DIGLREWLIVIGIIVIAGILF) threads the bilayer. Residues 23–273 (DGWRRMRGGK…ERRQMTIKQR (251 aa)) lie on the Cytoplasmic side of the membrane. The segment at 61–127 (VVNREHEPSL…DLQERPQKEQ (67 aa)) is disordered.

This sequence belongs to the ZipA family. Interacts with FtsZ via their C-terminal domains.

It is found in the cell inner membrane. Functionally, essential cell division protein that stabilizes the FtsZ protofilaments by cross-linking them and that serves as a cytoplasmic membrane anchor for the Z ring. Also required for the recruitment to the septal ring of downstream cell division proteins. This Stutzerimonas stutzeri (strain A1501) (Pseudomonas stutzeri) protein is Cell division protein ZipA.